Reading from the N-terminus, the 113-residue chain is U11-theraphotoxin-Hhn1a (113 aa).

The first 21 residues, 1 to 21, serve as a signal peptide directing secretion; the sequence is MNTVRVTFLPVFVLAVSLGQA. Positions 22 to 74 are excised as a propeptide; that stretch reads DKDENRMEMQEKTEQGKSYLDFAENLLLQKLEELEAKLLEEDSEESRNSRQKR. Residues 61–83 form a disordered region; sequence EEDSEESRNSRQKRCIGEGVPCD. 3 cysteine pairs are disulfide-bonded: cysteine 75–cysteine 90, cysteine 82–cysteine 95, and cysteine 89–cysteine 110.

Belongs to the neurotoxin 14 (magi-1) family. 01 (HNTX-16) subfamily. In terms of tissue distribution, expressed by the venom gland.

It localises to the secreted. The protein is U11-theraphotoxin-Hhn1a of Cyriopagopus hainanus (Chinese bird spider).